Consider the following 932-residue polypeptide: Protocadherin gamma-A2 (932 aa).

An N-terminal signal peptide occupies residues 1–28; that stretch reads MAALQKLPHCRKLFLLCFLLATLWEARA. 6 consecutive Cadherin domains span residues 29 to 133, 134 to 242, 243 to 347, 348 to 452, 453 to 562, and 570 to 682; these read GQIR…APRF, GVEE…APVF, TQPE…APEF, YMTS…APAF, SRTS…PPEI, and DGST…EPSA. Over 29–692 the chain is Extracellular; that stretch reads GQIRYSVREE…KPNDSDLTLY (664 aa). N-linked (GlcNAc...) asparagine glycosylation is found at asparagine 419 and asparagine 545. Asparagine 685 is a glycosylation site (N-linked (GlcNAc...) asparagine). The helical transmembrane segment at 693–713 threads the bilayer; the sequence is LVVAVAAVSCVFLAFVIVLLA. Over 714–932 the chain is Cytoplasmic; the sequence is HRLRRWHKSR…KKKSGKKEKK (219 aa). 2 disordered regions span residues 798–841 and 902–932; these read LEEE…WPNN and ATLT…KEKK. Over residues 806 to 841 the composition is skewed to polar residues; it reads FSQQAPPNTDWRFSQAQRPGTSGSQNGDDTGTWPNN. Over residues 922 to 932 the composition is skewed to basic residues; that stretch reads NKKKSGKKEKK.

It is found in the cell membrane. Functionally, potential calcium-dependent cell-adhesion protein. May be involved in the establishment and maintenance of specific neuronal connections in the brain. The protein is Protocadherin gamma-A2 (PCDHGA2) of Pan troglodytes (Chimpanzee).